The primary structure comprises 402 residues: Phosphomevalonate dehydratase large subunit (402 aa).

Positions 48, 49, 50, 79, and 80 each coordinate (R)-5-phosphomevalonate. A [4Fe-4S] cluster-binding site is contributed by Cys122. The (R)-5-phosphomevalonate site is built by Glu145 and Ser146. Positions 297 and 356 each coordinate [4Fe-4S] cluster. Lys377 lines the (R)-5-phosphomevalonate pocket.

This sequence belongs to the AcnX type II large subunit family. In terms of assembly, heterodimer composed of a large subunit (PMDh-L) and a small subunit (PMDh-S). Requires [4Fe-4S] cluster as cofactor.

It catalyses the reaction (R)-5-phosphomevalonate = (2E)-3-methyl-5-phosphooxypent-2-enoate + H2O. It participates in isoprenoid biosynthesis; isopentenyl diphosphate biosynthesis via mevalonate pathway. Its activity is regulated as follows. Neither the addition of 1 mM Mg(2+) nor 1 mM Mn(2+) has a significant effect on the activity, whereas Zn(2+) causes almost complete inactivation. Strongly inhibited by H(2)O(2), but not by EDTA or iodoacetamide. Functionally, component of a hydro-lyase that catalyzes the dehydration of mevalonate 5-phosphate (MVA5P) to form trans-anhydromevalonate 5-phosphate (tAHMP). Involved in the archaeal mevalonate (MVA) pathway, which provides fundamental precursors for isoprenoid biosynthesis, such as isopentenyl diphosphate (IPP) and dimethylallyl diphosphate (DMAPP). This chain is Phosphomevalonate dehydratase large subunit, found in Aeropyrum pernix (strain ATCC 700893 / DSM 11879 / JCM 9820 / NBRC 100138 / K1).